Consider the following 326-residue polypeptide: Putative ankyrin repeat protein L25 (326 aa).

10 ANK repeats span residues 11-40 (RSEYPLRWASTEGHVEVVIYLVENGADLNV), 42-65 (KLFYVDKYLQVVKYLIENGSNIHV), 66-95 (DDEFTLIYASKGGYLELVNLLIKNGADIHV), 96-125 (NDDAPLKWASKNGHLEVVKYLVENGADIHA), 127-154 (NELVVYASEGGHLQIVKYLVKKGADIHA), 155-184 (EDDEALKWASRSGHLEVVKYLVEKGANFRA), 185-214 (ENDYALRWACEKGHLEIVKYLVEKGADIHA), 216-244 (DEYALRWASRSGHLEVVKYLVENGADIHA), 246-274 (NDYGLRKASRNRHLNVVKYLMENGANIHA), and 275-304 (KDDYALRLASVNGHFKLVKFLVENGANIHA).

The sequence is that of Putative ankyrin repeat protein L25 from Acanthamoeba polyphaga mimivirus (APMV).